Here is a 675-residue protein sequence, read N- to C-terminus: DNA ligase (675 aa).

Residues 35–39, 84–85, and Glu-116 contribute to the NAD(+) site; these read DEAYD and SL. The N6-AMP-lysine intermediate role is filled by Lys-118. Residues Arg-139, Glu-180, Lys-296, and Lys-320 each coordinate NAD(+). The Zn(2+) site is built by Cys-414, Cys-417, Cys-432, and Cys-437. The BRCT domain maps to 597–675; that stretch reads PVDAFWNGKT…EREFLERLGM (79 aa).

Belongs to the NAD-dependent DNA ligase family. LigA subfamily. Requires Mg(2+) as cofactor. The cofactor is Mn(2+).

It carries out the reaction NAD(+) + (deoxyribonucleotide)n-3'-hydroxyl + 5'-phospho-(deoxyribonucleotide)m = (deoxyribonucleotide)n+m + AMP + beta-nicotinamide D-nucleotide.. DNA ligase that catalyzes the formation of phosphodiester linkages between 5'-phosphoryl and 3'-hydroxyl groups in double-stranded DNA using NAD as a coenzyme and as the energy source for the reaction. It is essential for DNA replication and repair of damaged DNA. This is DNA ligase from Syntrophobacter fumaroxidans (strain DSM 10017 / MPOB).